A 585-amino-acid chain; its full sequence is Arginine--tRNA ligase (585 aa).

Positions 127 to 137 (PNTNKPLHVGH) match the 'HIGH' region motif.

It belongs to the class-I aminoacyl-tRNA synthetase family. As to quaternary structure, monomer.

The protein localises to the cytoplasm. It catalyses the reaction tRNA(Arg) + L-arginine + ATP = L-arginyl-tRNA(Arg) + AMP + diphosphate. The polypeptide is Arginine--tRNA ligase (Borrelia garinii subsp. bavariensis (strain ATCC BAA-2496 / DSM 23469 / PBi) (Borreliella bavariensis)).